The primary structure comprises 168 residues: Protein C2-DOMAIN ABA-RELATED 1 (168 aa).

N-acetylmethionine is present on Met1. Residues 1–104 (MENLVGLLRI…EAIKFAHQLG (104 aa)) form the C2 domain. Residues Arg21, Asp22, Asp27, Asp73, Tyr74, Asp75, and Asp81 each coordinate Ca(2+).

Belongs to the plant CAR protein family. In terms of assembly, dimers and oligomers. Binds to PYR/PYL/RCAR abscisic acid intracellular receptors in an ABA-independent manner, both at the plasma membrane and in the nucleus. Interacts directly with PYR1, PYL1, PYL4, PYL6 and PYL8. Binds phospholipids in a Ca(2+)-dependent manner. It depends on Ca(2+) as a cofactor. In terms of tissue distribution, expressed in roots.

Its subcellular location is the cell membrane. It localises to the nucleus. In terms of biological role, stimulates the GTPase/ATPase activities of Obg-like ATPases. Mediates the transient calcium-dependent interaction of PYR/PYL/RCAR abscisic acid (ABA) receptors with the plasma membrane and thus regulates ABA sensitivity. Binds liposomes in the absence of exogenous Ca(2+), but this activity is enhanced in the presence of Ca(2+) and generates membrane curvature. This Arabidopsis thaliana (Mouse-ear cress) protein is Protein C2-DOMAIN ABA-RELATED 1.